The chain runs to 127 residues: uncharacterized protein (127 aa).

2 consecutive transmembrane segments (helical) span residues 13-35 (ILLLISIFFLVCIISLVGIGIIF) and 57-81 (AVLIVLGVFAICFMIIQLVISIMIW).

It localises to the cell membrane. This is an uncharacterized protein from Mycoplasma genitalium (strain ATCC 33530 / DSM 19775 / NCTC 10195 / G37) (Mycoplasmoides genitalium).